The following is a 90-amino-acid chain: DNA-binding protein HU-beta (90 aa).

Belongs to the bacterial histone-like protein family. Heterodimer of an alpha and a beta chain.

Functionally, histone-like DNA-binding protein which is capable of wrapping DNA to stabilize it, and thus to prevent its denaturation under extreme environmental conditions. The protein is DNA-binding protein HU-beta (hupB) of Salmonella typhi.